A 238-amino-acid chain; its full sequence is Phosphoribosylaminoimidazole-succinocarboxamide synthase (238 aa).

The protein belongs to the SAICAR synthetase family.

It carries out the reaction 5-amino-1-(5-phospho-D-ribosyl)imidazole-4-carboxylate + L-aspartate + ATP = (2S)-2-[5-amino-1-(5-phospho-beta-D-ribosyl)imidazole-4-carboxamido]succinate + ADP + phosphate + 2 H(+). It functions in the pathway purine metabolism; IMP biosynthesis via de novo pathway; 5-amino-1-(5-phospho-D-ribosyl)imidazole-4-carboxamide from 5-amino-1-(5-phospho-D-ribosyl)imidazole-4-carboxylate: step 1/2. This chain is Phosphoribosylaminoimidazole-succinocarboxamide synthase, found in Nitrosococcus oceani (strain ATCC 19707 / BCRC 17464 / JCM 30415 / NCIMB 11848 / C-107).